Reading from the N-terminus, the 273-residue chain is Eukaryotic translation initiation factor 3 subunit J (273 aa).

Residues 1–158 (MPTKKWEDEE…DPSDPSKTVE (158 aa)) are disordered. A compositionally biased stretch (acidic residues) spans 34 to 54 (DEEANDSDVLDSWDAAEDSEV). The stretch at 50–97 (EDSEVEREKAKKAAEAKAKAEAEAKANKKTKAARINEHKQRRKEAEES) forms a coiled coil. The segment covering 55–75 (EREKAKKAAEAKAKAEAEAKA) has biased composition (basic and acidic residues). Positions 95-104 (EESDESDDET) are enriched in acidic residues. A compositionally biased stretch (basic and acidic residues) spans 105-126 (ESQRRERLRRTEKEADLAHAED).

The protein belongs to the eIF-3 subunit J family. In terms of assembly, component of the eukaryotic translation initiation factor 3 (eIF-3) complex.

It is found in the cytoplasm. Functionally, component of the eukaryotic translation initiation factor 3 (eIF-3) complex, which is involved in protein synthesis of a specialized repertoire of mRNAs and, together with other initiation factors, stimulates binding of mRNA and methionyl-tRNAi to the 40S ribosome. The eIF-3 complex specifically targets and initiates translation of a subset of mRNAs involved in cell proliferation. The sequence is that of Eukaryotic translation initiation factor 3 subunit J from Pyricularia oryzae (strain 70-15 / ATCC MYA-4617 / FGSC 8958) (Rice blast fungus).